The chain runs to 146 residues: Leghemoglobin 49 (146 aa).

One can recognise a Globin domain in the interval G2 to S146. Residues Y24 and Y29 each carry the nitrated tyrosine modification. Residue S44 coordinates heme b. S44 is modified (phosphoserine). H61 provides a ligand contact to O2. Residues H93 and K96 each contribute to the heme b site. Y134 bears the Nitrated tyrosine mark.

It belongs to the plant globin family. In terms of assembly, monomer. In terms of processing, nitrated in effective nodules and particularly in hypoxic conditions; this mechanism may play a protective role in the symbiosis by buffering toxic peroxynitrite NO(2)(-). Nitration level decrease during nodule senescence. Phosphorylation at Ser-44 disrupts the molecular environment of its porphyrin ring oxygen binding pocket, thus leading to a reduced oxygen consumption and to the delivery of oxygen O(2) to symbiosomes. In terms of tissue distribution, accumulates in root nodules after inoculation by bacteria of the genus Rhizobium.

Its subcellular location is the cytoplasm. The protein localises to the cytosol. The protein resides in the nucleus. Leghemoglobin that reversibly binds oxygen O(2) through a pentacoordinated heme iron. In root nodules, facilitates the diffusion of oxygen to the bacteroids while preventing the bacterial nitrogenase from being inactivated by buffering dioxygen, nitric oxide and carbon monoxide, and promoting the formation of reactive oxygen species (ROS, e.g. H(2)O(2)). This role is essential for symbiotic nitrogen fixation (SNF). The polypeptide is Leghemoglobin 49 (Vicia faba (Broad bean)).